The sequence spans 328 residues: NADH-quinone oxidoreductase subunit H (328 aa).

8 consecutive transmembrane segments (helical) span residues 10–30 (IIKI…GTYF), 80–100 (IAPV…PFLP), 118–138 (IGIL…LLGG), 155–175 (AVFI…IMMV), 191–211 (ITSW…IAAF), 243–263 (LFFI…SLLF), 272–292 (LLGA…FLWT), and 306–326 (WLCW…TAIV).

This sequence belongs to the complex I subunit 1 family. NDH-1 is composed of 14 different subunits. Subunits NuoA, H, J, K, L, M, N constitute the membrane sector of the complex.

The protein resides in the cell inner membrane. It carries out the reaction a quinone + NADH + 5 H(+)(in) = a quinol + NAD(+) + 4 H(+)(out). Its function is as follows. NDH-1 shuttles electrons from NADH, via FMN and iron-sulfur (Fe-S) centers, to quinones in the respiratory chain. The immediate electron acceptor for the enzyme in this species is believed to be ubiquinone. Couples the redox reaction to proton translocation (for every two electrons transferred, four hydrogen ions are translocated across the cytoplasmic membrane), and thus conserves the redox energy in a proton gradient. This subunit may bind ubiquinone. This Sulfurimonas denitrificans (strain ATCC 33889 / DSM 1251) (Thiomicrospira denitrificans (strain ATCC 33889 / DSM 1251)) protein is NADH-quinone oxidoreductase subunit H.